Reading from the N-terminus, the 286-residue chain is Bifunctional protein FolD (286 aa).

NADP(+) contacts are provided by residues 165-167 (GRS), Ser-190, and Val-231.

This sequence belongs to the tetrahydrofolate dehydrogenase/cyclohydrolase family. As to quaternary structure, homodimer.

It carries out the reaction (6R)-5,10-methylene-5,6,7,8-tetrahydrofolate + NADP(+) = (6R)-5,10-methenyltetrahydrofolate + NADPH. The enzyme catalyses (6R)-5,10-methenyltetrahydrofolate + H2O = (6R)-10-formyltetrahydrofolate + H(+). It participates in one-carbon metabolism; tetrahydrofolate interconversion. Its function is as follows. Catalyzes the oxidation of 5,10-methylenetetrahydrofolate to 5,10-methenyltetrahydrofolate and then the hydrolysis of 5,10-methenyltetrahydrofolate to 10-formyltetrahydrofolate. The chain is Bifunctional protein FolD from Bacillus cytotoxicus (strain DSM 22905 / CIP 110041 / 391-98 / NVH 391-98).